The primary structure comprises 213 residues: MLAILDYKAGNQTSVRRALDHLGIPCVITADPEVIQGAAGVIFPGVGAAGQAMNELVTTGLDEVLRRQVQAGRPLLGICVGCQIMLDYSQENDTKALGIIPGECRLFNPAWTDEDGAPIRVPHMGWNRIVQRRPCELLKGIEPEAEFYFVHSYYPAPPEEYVIATCTYGTEFCAIHGGPGLWAVQFHPEKSGRPGLRLLANFHRYCTEAADAQ.

A Glutamine amidotransferase type-1 domain is found at 1 to 212 (MLAILDYKAG…HRYCTEAADA (212 aa)). The Nucleophile role is filled by cysteine 79. Catalysis depends on residues histidine 187 and glutamate 189.

In terms of assembly, heterodimer of HisH and HisF.

It localises to the cytoplasm. It carries out the reaction 5-[(5-phospho-1-deoxy-D-ribulos-1-ylimino)methylamino]-1-(5-phospho-beta-D-ribosyl)imidazole-4-carboxamide + L-glutamine = D-erythro-1-(imidazol-4-yl)glycerol 3-phosphate + 5-amino-1-(5-phospho-beta-D-ribosyl)imidazole-4-carboxamide + L-glutamate + H(+). It catalyses the reaction L-glutamine + H2O = L-glutamate + NH4(+). It functions in the pathway amino-acid biosynthesis; L-histidine biosynthesis; L-histidine from 5-phospho-alpha-D-ribose 1-diphosphate: step 5/9. Its function is as follows. IGPS catalyzes the conversion of PRFAR and glutamine to IGP, AICAR and glutamate. The HisH subunit catalyzes the hydrolysis of glutamine to glutamate and ammonia as part of the synthesis of IGP and AICAR. The resulting ammonia molecule is channeled to the active site of HisF. This Nitratidesulfovibrio vulgaris (strain DP4) (Desulfovibrio vulgaris) protein is Imidazole glycerol phosphate synthase subunit HisH.